The primary structure comprises 445 residues: MSTILESLPTGQKVGIAFSGGLDTSAALHWMKLKGAVPYAYTANLGQPDEDDYDAIPKRAIEYGAAGARLIDCRAQLVAEGIAALQSGAFHITTAGVTYFNTTPIGRAVTGTMLVAAMKEDGVNIWGDGSTYKGNDIERFYRYGLLVNPDLKIYKPWLDQTFIDELGGRAEMSEFMNQAGFAYKMSAEKAYSTDSNLLGATHEAKDLESLESGIKIVNPIMGVAFWRDDVKIAAEEVTVRFEAGQPVALNGVEFKDPVELLLEANRIGGRHGLGMSDQIENRIIEAKSRGIYEAPGLALLYIAYERLVTGIHNEDTIEQYRENGRRLGRLLYQGRWFDPQAIMLRETAQRWVARAITGEVKIELRRGNDYSILSTKSPNLTYQPERLSMEKVASTFSPRDRIGQLTMRNLDITDTRDKLRVYSQVGLLTPGESSALPQIKGDDGK.

Residues 17 to 25 and Ala-43 each bind ATP; that span reads AFSGGLDTS. Tyr-99 contributes to the L-citrulline binding site. Gly-129 and Thr-131 together coordinate ATP. 3 residues coordinate L-aspartate: Thr-131, Asn-135, and Asp-136. Asn-135 is an L-citrulline binding site. Asp-136 lines the ATP pocket. L-citrulline is bound by residues Arg-139 and Ser-192. Residue Asp-194 coordinates ATP. Residues Thr-201, Glu-203, and Glu-280 each coordinate L-citrulline.

It belongs to the argininosuccinate synthase family. Type 2 subfamily. In terms of assembly, homotetramer.

Its subcellular location is the cytoplasm. It carries out the reaction L-citrulline + L-aspartate + ATP = 2-(N(omega)-L-arginino)succinate + AMP + diphosphate + H(+). It functions in the pathway amino-acid biosynthesis; L-arginine biosynthesis; L-arginine from L-ornithine and carbamoyl phosphate: step 2/3. This chain is Argininosuccinate synthase, found in Burkholderia ambifaria (strain MC40-6).